The sequence spans 395 residues: MNKLSAPRAQHAVDPVELTADLVRCQTVTPEEGSALKLLSALLSEHGFQCQRIDRNGIPNLFAIWGEDRNGRTFGFNGHTDVVPIGDPKDWTVDPFGAEIRDGILYGRGSTDMKSGVAAFAAAAIEFVNETPPDGRVIIAITGAEETGSPDGTRAIVQWMEANDIRADHFIVGEPTSLKSIGDAIKIGRRGTITVFLTVTGVQGHSGYPEKANNPLPALVDLLQGFGQAAMDEGTEFFAPSTLAITTIDTGNPARNVIPATCKATLSIRFNDKWTSGKVLDWVSRHTRAAEDKFGVTISADHYLSGECFFTPPGALSKLVQDAVEQETGQRPQMTTLGGSSDARHLFKHCPVVEVGLTGETLHQVDEHVSVAEINALKTVYGRILRDYFGSEGKI.

A Zn(2+)-binding site is contributed by histidine 79. Aspartate 81 is an active-site residue. A Zn(2+)-binding site is contributed by aspartate 112. Glutamate 145 serves as the catalytic Proton acceptor. 3 residues coordinate Zn(2+): glutamate 146, glutamate 174, and histidine 363.

This sequence belongs to the peptidase M20A family. DapE subfamily. Homodimer. Requires Zn(2+) as cofactor. The cofactor is Co(2+).

The enzyme catalyses N-succinyl-(2S,6S)-2,6-diaminopimelate + H2O = (2S,6S)-2,6-diaminopimelate + succinate. It participates in amino-acid biosynthesis; L-lysine biosynthesis via DAP pathway; LL-2,6-diaminopimelate from (S)-tetrahydrodipicolinate (succinylase route): step 3/3. In terms of biological role, catalyzes the hydrolysis of N-succinyl-L,L-diaminopimelic acid (SDAP), forming succinate and LL-2,6-diaminopimelate (DAP), an intermediate involved in the bacterial biosynthesis of lysine and meso-diaminopimelic acid, an essential component of bacterial cell walls. In Ruegeria sp. (strain TM1040) (Silicibacter sp.), this protein is Succinyl-diaminopimelate desuccinylase 2.